A 159-amino-acid chain; its full sequence is Developmental pluripotency-associated protein 3 (159 aa).

Disordered stretches follow at residues 1 to 31 (MDPSQFNPTYIPGSPQMLTEENSRDDSGASQ) and 140 to 159 (GWDPSENARIGNQDTKPLQP). Residues 149 to 159 (IGNQDTKPLQP) are compositionally biased toward polar residues.

As to expression, low expression in testis, ovary and thymus. Expressed in embryonic stem and carcinoma cells. Highly expressed in testicular germ cell tumors.

The protein localises to the nucleus. It is found in the cytoplasm. Primordial germ cell (PGCs)-specific protein involved in epigenetic chromatin reprogramming in the zygote following fertilization. In zygotes, DNA demethylation occurs selectively in the paternal pronucleus before the first cell division, while the adjacent maternal pronucleus and certain paternally-imprinted loci are protected from this process. Participates in protection of DNA methylation in the maternal pronucleus by preventing conversion of 5mC to 5hmC: specifically recognizes and binds histone H3 dimethylated at 'Lys-9' (H3K9me2) on maternal genome, and protects maternal genome from TET3-mediated conversion to 5hmC and subsequent DNA demethylation. Does not bind paternal chromatin, which is mainly packed into protamine and does not contain much H3K9me2 mark. Also protects imprinted loci that are marked with H3K9me2 in mature sperm from DNA demethylation in early embryogenesis. May be important for the totipotent/pluripotent states continuing through preimplantation development. Also involved in chromatin condensation in oocytogenesis. This Homo sapiens (Human) protein is Developmental pluripotency-associated protein 3 (DPPA3).